A 511-amino-acid polypeptide reads, in one-letter code: ATP synthase subunit alpha 1 (511 aa).

Position 174 to 181 (174 to 181) interacts with ATP; sequence GDRQTGKT.

This sequence belongs to the ATPase alpha/beta chains family. As to quaternary structure, F-type ATPases have 2 components, CF(1) - the catalytic core - and CF(0) - the membrane proton channel. CF(1) has five subunits: alpha(3), beta(3), gamma(1), delta(1), epsilon(1). CF(0) has four main subunits: a(1), b(1), b'(1) and c(9-12).

It localises to the cell inner membrane. It catalyses the reaction ATP + H2O + 4 H(+)(in) = ADP + phosphate + 5 H(+)(out). Its function is as follows. Produces ATP from ADP in the presence of a proton gradient across the membrane. The alpha chain is a regulatory subunit. This is ATP synthase subunit alpha 1 from Chlorobium luteolum (strain DSM 273 / BCRC 81028 / 2530) (Pelodictyon luteolum).